The following is a 379-amino-acid chain: Cytochrome b (379 aa).

4 helical membrane passes run 34–54 (YGSL…FLSM), 78–99 (WLLR…YLHA), 114–134 (WNIG…GYVL), and 179–199 (FFAF…LHIM). Heme b is bound by residues H84 and H98. Residues H183 and H197 each contribute to the heme b site. H202 contacts a ubiquinone. 4 helical membrane passes run 227 to 247 (IKDT…VLFE), 289 to 309 (LGGV…PLTS), 321 to 341 (LNKT…WIGG), and 349 to 369 (IIIG…SPTI).

This sequence belongs to the cytochrome b family. The main subunits of complex b-c1 are: cytochrome b, cytochrome c1 and the Rieske protein. Heme b serves as cofactor.

The protein resides in the mitochondrion inner membrane. Functionally, component of the ubiquinol-cytochrome c reductase complex (complex III or cytochrome b-c1 complex) that is part of the mitochondrial respiratory chain. The b-c1 complex mediates electron transfer from ubiquinol to cytochrome c. Contributes to the generation of a proton gradient across the mitochondrial membrane that is then used for ATP synthesis. This is Cytochrome b (MT-CYB) from Lumbricus terrestris (Common earthworm).